The following is an 849-amino-acid chain: Autoinducer 1 sensor kinase/phosphatase LuxN (849 aa).

The next 7 membrane-spanning stretches (helical) occupy residues 9–29 (IVYA…MWLF), 41–61 (VIFG…IAWI), 160–180 (SYFF…LVAM), 196–216 (IAGI…MTYF), 220–242 (FSLT…YALL), 251–275 (YIAY…AIFI), and 283–301 (WLIA…QLLY). Positions 468 to 683 (SIAHEMRNPL…EFHLYFPVVP (216 aa)) constitute a Histidine kinase domain. His471 bears the Phosphohistidine; by autocatalysis mark. One can recognise a Response regulatory domain in the interval 722-835 (TVLIVDDKEV…ALRHVLGNWL (114 aa)). Residue Asp771 is modified to 4-aspartylphosphate.

It is found in the cell inner membrane. The catalysed reaction is ATP + protein L-histidine = ADP + protein N-phospho-L-histidine.. The phosphatase activity is constitutive and the kinase activity is regulated by the presence or absence of AI-1. At low cell density the kinase activity overrides the phosphatase activity. Its function is as follows. At low cell density, in the absence of AI-1 (autoinducer 1), LuxN has a kinase activity and autophosphorylates on His-471. The phosphoryl group is then transferred on Asp-771 of the response regulator domain. The phosphoryl group is transferred to LuxU, and ultimately to LuxO. At high cell density, in the presence of AI-1, the kinase activity is inactivated, and the response regulator domain has a phosphatase activity. LuxN phosphatase acts on itself. As LuxU could function to establish an equilibrium between the aspartyl-phosphate of LuxN and the aspartyl-phosphate of LuxO, LuxU transfers phosphate from LuxO to LuxN and finally phosphate is drained from the system. This is Autoinducer 1 sensor kinase/phosphatase LuxN (luxN) from Vibrio campbellii (strain ATCC BAA-1116).